Here is a 306-residue protein sequence, read N- to C-terminus: Pantothenate kinase (306 aa).

ATP is bound at residue 90 to 97 (GSVAVGKS).

The protein belongs to the prokaryotic pantothenate kinase family.

The protein localises to the cytoplasm. It catalyses the reaction (R)-pantothenate + ATP = (R)-4'-phosphopantothenate + ADP + H(+). It participates in cofactor biosynthesis; coenzyme A biosynthesis; CoA from (R)-pantothenate: step 1/5. This Lactococcus lactis subsp. lactis (strain IL1403) (Streptococcus lactis) protein is Pantothenate kinase (coaA).